Consider the following 360-residue polypeptide: GDSL esterase/lipase At1g58430 (360 aa).

A signal peptide spans 1-23 (MWTSKTISFTLFITTTLLGSCNA). A glycan (N-linked (GlcNAc...) asparagine) is linked at Asn22. The Nucleophile role is filled by Ser42. 2 N-linked (GlcNAc...) asparagine glycosylation sites follow: Asn104 and Asn326. Active-site residues include Asp334 and His337.

This sequence belongs to the 'GDSL' lipolytic enzyme family.

Its subcellular location is the secreted. The chain is GDSL esterase/lipase At1g58430 from Arabidopsis thaliana (Mouse-ear cress).